A 704-amino-acid polypeptide reads, in one-letter code: Meprin A subunit beta (704 aa).

The signal sequence occupies residues 1–20 (MDARHWPWFLVFATFLLVSG). Positions 21-64 (LPAPEKFVKDIDGGIDQDIFDINEDLGLDLFEGDIKLEASGRNS) are excised as a propeptide. Over 21 to 654 (LPAPEKFVKD…RCEKRGSTKD (634 aa)) the chain is Extracellular. One can recognise a Peptidase M12A domain in the interval 63 to 257 (NSIIGDNYRW…LKLNQLYSCT (195 aa)). 3 cysteine pairs are disulfide-bonded: C104–C256, C125–C145, and C266–C428. Zn(2+) is bound at residue H153. E154 is a catalytic residue. 2 residues coordinate Zn(2+): H157 and H163. N-linked (GlcNAc...) asparagine glycosylation is found at N193, N219, N316, N422, N437, N528, N547, and N592. In terms of domain architecture, MAM spans 261-430 (SFMDSCDFEL…INLSETRCPH (170 aa)). The region spanning 431–585 (HIWHIQNFTQ…GDDVYILLTV (155 aa)) is the MATH domain. Positions 607 to 647 (VHNACSEVECQNGGICTLQEGRAECKCPAGEDWWYMGKRCE) constitute an EGF-like domain. Cystine bridges form between C611-C622, C616-C631, and C633-C646. The chain crosses the membrane as a helical span at residues 655 to 678 (TIVIAVSSTVTVFAVMLIITLISV). The Cytoplasmic portion of the chain corresponds to 679–704 (YCTRRKYRKKASAKTAAMNLENQHAF). T693 is modified (phosphothreonine).

As to quaternary structure, homotetramer consisting of disulfide-linked beta subunits, or heterotetramer of two alpha and two beta subunits formed by non-covalent association of two disulfide-linked heterodimers. Interacts with MBL2 through its carbohydrate moiety. This interaction may inhibit its catalytic activity. Interacts with TSPAN8. It depends on Zn(2+) as a cofactor. N-glycosylated; contains high mannose and/or complex biantennary structures. Post-translationally, proteolytically activated by trypsin in the intestinal lumen and kallikrein-related peptidases in other tissues. In terms of processing, phosphorylated by PKC at multiple sites of its cytoplasmic part. Phosphorylation dcreases activity at the cell surface, leading to diminished substrate cleavage. Kidney, intestinal brush borders and salivary ducts.

It is found in the cell membrane. It localises to the secreted. It catalyses the reaction Hydrolysis of proteins, including azocasein, and peptides. Hydrolysis of 5-His-|-Leu-6, 6-Leu-|-Cys-7, 14-Ala-|-Leu-15 and 19-Cys-|-Gly-20 bonds in insulin B chain.. With respect to regulation, strongly inhibited by fetuin-A/AHSG. Membrane metallopeptidase that sheds many membrane-bound proteins. Exhibits a strong preference for acidic amino acids at the P1' position. Known substrates include: FGF19, VGFA, IL1B, IL18, procollagen I and III, E-cadherin, KLK7, gastrin, ADAM10, tenascin-C. The presence of several pro-inflammatory cytokine among substrates implicate MEP1B in inflammation. It is also involved in tissue remodeling due to its capability to degrade extracellular matrix components. The polypeptide is Meprin A subunit beta (Mep1b) (Rattus norvegicus (Rat)).